The following is a 114-amino-acid chain: Amphinase-4 (114 aa).

His-15 acts as the Proton acceptor in catalysis. Intrachain disulfides connect Cys-26–Cys-79, Cys-41–Cys-85, Cys-59–Cys-100, and Cys-97–Cys-114. A glycan (N-linked (GlcNAc...) asparagine) is linked at Asn-27. 42-46 (KPVNT) provides a ligand contact to substrate. N-linked (GlcNAc...) asparagine glycans are attached at residues Asn-67 and Asn-91. His-107 functions as the Proton donor in the catalytic mechanism.

Belongs to the pancreatic ribonuclease family. In terms of assembly, monomer. In terms of processing, there are at least five different forms arising from glycan heterogeneity.

It localises to the secreted. Functionally, endonuclease, hydrolyzes highly polymerized RNA, poly(U) and poly(C), and the dinucleotides CpA and UpA. Hydrolyzes rCA, rUA and rUG. Has cytotoxic activity against cultured human submaxillary gland carcinoma cells. This is Amphinase-4 from Lithobates pipiens (Northern leopard frog).